A 348-amino-acid chain; its full sequence is Guanosine ABC transporter permease protein NupP (348 aa).

Transmembrane regions (helical) follow at residues 8–28 (LLVP…IMLV), 61–81 (YILS…NIGV), 85–105 (LLVG…PAYI), 107–127 (LPLA…IPGI), 136–156 (EVIV…YIIS), 189–209 (LHLG…IINK), 237–257 (IMTS…MEGL), 277–297 (IAVA…ACLL), and 320–340 (IVIA…FVMG).

The protein belongs to the binding-protein-dependent transport system permease family. The complex is composed of two ATP-binding proteins (NupO), two transmembrane proteins (NupP and NupQ) and a solute-binding protein (NupN).

It is found in the cell membrane. Functionally, part of an ABC transporter complex involved in the uptake of guanosine. Responsible for the translocation of the substrate across the membrane. May be a nucleoside transporter of broad specificity but with various affinities for different substrates. The protein is Guanosine ABC transporter permease protein NupP of Bacillus subtilis (strain 168).